Reading from the N-terminus, the 198-residue chain is Dephospho-CoA kinase (198 aa).

The DPCK domain maps to V3 to A198. An ATP-binding site is contributed by G11–T16.

It belongs to the CoaE family.

It localises to the cytoplasm. It carries out the reaction 3'-dephospho-CoA + ATP = ADP + CoA + H(+). It functions in the pathway cofactor biosynthesis; coenzyme A biosynthesis; CoA from (R)-pantothenate: step 5/5. Catalyzes the phosphorylation of the 3'-hydroxyl group of dephosphocoenzyme A to form coenzyme A. This chain is Dephospho-CoA kinase, found in Methylococcus capsulatus (strain ATCC 33009 / NCIMB 11132 / Bath).